Consider the following 343-residue polypeptide: Phosphate acyltransferase (343 aa).

This sequence belongs to the PlsX family. In terms of assembly, homodimer. Probably interacts with PlsY.

It localises to the cytoplasm. The catalysed reaction is a fatty acyl-[ACP] + phosphate = an acyl phosphate + holo-[ACP]. The protein operates within lipid metabolism; phospholipid metabolism. Functionally, catalyzes the reversible formation of acyl-phosphate (acyl-PO(4)) from acyl-[acyl-carrier-protein] (acyl-ACP). This enzyme utilizes acyl-ACP as fatty acyl donor, but not acyl-CoA. The sequence is that of Phosphate acyltransferase from Halorhodospira halophila (strain DSM 244 / SL1) (Ectothiorhodospira halophila (strain DSM 244 / SL1)).